Here is a 140-residue protein sequence, read N- to C-terminus: MDTRGSFSCGFLLLLLIQLQPSRANPIYNLSPAKELASMEALLERLEDKFALIEALESNPDLQEPQTQEEIPPELTDDSDEQKAEPKLASNTPLSYRNPFLKRLRGVQMPRMMRDSGCFGRRIDRIGSLSGMGCNGSRKN.

Positions 1–24 (MDTRGSFSCGFLLLLLIQLQPSRA) are cleaved as a signal peptide. Positions 25-111 (NPIYNLSPAK…KRLRGVQMPR (87 aa)) are excised as a propeptide. The tract at residues 55–94 (ALESNPDLQEPQTQEEIPPELTDDSDEQKAEPKLASNTPL) is disordered. The segment covering 71–80 (IPPELTDDSD) has biased composition (acidic residues). Residues Cys-118 and Cys-134 are joined by a disulfide bond.

It belongs to the natriuretic peptide family. Cleaved by CORIN upon secretion to produce the functional hormone.

It localises to the secreted. Its function is as follows. Hormone playing a key role in cardiovascular homeostasis through regulation of natriuresis, diuresis, and vasodilation. Specifically binds and stimulates the cGMP production of the NPR1 receptor. Binds the clearance receptor NPR3. The sequence is that of Natriuretic peptides A (NPPA) from Gallus gallus (Chicken).